A 492-amino-acid chain; its full sequence is Spore germination protein XA (492 aa).

7 helical membrane-spanning segments follow: residues 246–266 (FILLVDGSPTATIAPVSFPFF), 285–305 (LLSLFGIAISIFLPGFWVALV), 325–345 (EGIPFPAPLEGMIMITLFELL), 353–373 (PAAFGQTLSVVGGLIIGQAAI), 377–397 (FVSPSMVVMIAISVVSTFTLV), 413–433 (FLMSSFLGIVGFICSILLIVI), and 442–462 (GLPFLAPYSPPVFSSMLPSTF).

The protein belongs to the GerABKA family.

It localises to the cell membrane. Its function is as follows. May allow B.anthracis to germinate within phagocytic cells and therefore involved in virulence. This chain is Spore germination protein XA (gerXA), found in Bacillus anthracis.